Here is a 185-residue protein sequence, read N- to C-terminus: Elongation factor P 1 (185 aa).

Belongs to the elongation factor P family.

Its subcellular location is the cytoplasm. Its pathway is protein biosynthesis; polypeptide chain elongation. Involved in peptide bond synthesis. Stimulates efficient translation and peptide-bond synthesis on native or reconstituted 70S ribosomes in vitro. Probably functions indirectly by altering the affinity of the ribosome for aminoacyl-tRNA, thus increasing their reactivity as acceptors for peptidyl transferase. The sequence is that of Elongation factor P 1 (efp1) from Chlamydia caviae (strain ATCC VR-813 / DSM 19441 / 03DC25 / GPIC) (Chlamydophila caviae).